Here is a 63-residue protein sequence, read N- to C-terminus: 2-hydroxymuconate tautomerase (63 aa).

Proline 2 acts as the Proton acceptor; via imino nitrogen in catalysis.

It belongs to the 4-oxalocrotonate tautomerase family. As to quaternary structure, homohexamer.

It catalyses the reaction (2Z,4E)-2-hydroxyhexa-2,4-dienedioate = (3E)-2-oxohex-3-enedioate. The protein operates within xenobiotic degradation; toluene degradation. Its pathway is xenobiotic degradation; xylene degradation. Catalyzes the ketonization of 2-hydroxymuconate stereoselectively to yield 2-oxo-3-hexenedioate. The polypeptide is 2-hydroxymuconate tautomerase (xylH) (Pseudomonas putida (Arthrobacter siderocapsulatus)).